Here is a 779-residue protein sequence, read N- to C-terminus: MGFASASREEKLKMMKTNKTRKTTKNLNRLAKKKKLSREIRDGMSDIKARKSADLRQRAVNIEDDFIADREARYENDDEEDLPLDMMDADIDWENSAFANAKRRLDRKRNGGADSDEDEDEDDVETKKRKFAGQLEEGHEELLPIKLKDGTLIRPTREKEVEEQEEEEKSDIDEGEEDEPHKEDFSHLSASELITKRRELLQEFKDTIASHANMLLANPQVNIVRLRDLYNLCNGEKVHSLVREPVQKLAMASTLQVLLDIVPGYAIREQTAEEKSQKQKKETRNLVNFEESLLRYHLKYLQLCEKLSNKLVGKDRHNDENTFTFKMGILSVKALARIVISAPHFNYSTNIISSLVRLSLAKNETVVKEVCDAIRTVFKELHLKITLFTSRSISTLVTKRKGRVSPELLKTLLSMNITEVANEDKKSGKDALIAKKYQIKKERASKTAKKYKKQLARLEADLLEVEAEESLTKKMKHATEAMKFAFQTYFSVLKRMPSSALLEPVLEGLSKFAHLLSIEFYEDIVSTMENMVQNENLKPLDQLHCINTVFVILSGDGQLLNIDPSKFYRLAYRVLNHFPFEKRPEQRKNQIVMAAKTLETMLVTRRKAVPLSRVAAFVKRLLSIATVLDDFPALCIVSLVRSLFIAHPKLSSMIEDEEGGAPGVFRQDIDDPDVANALASDVRDELSMLARRRNVELSRFANNILYGVPSTGIFKLNPQLSSLKPWILMGQLTDNAKEAYDRVETKYLDELEKTAKKRNQTVTPKNINFHISNWLTVAK.

Disordered stretches follow at residues 1–20 and 100–189; these read MGFA…TNKT and NAKR…SHLS. Residues 114 to 124 show a composition bias toward acidic residues; sequence DSDEDEDEDDV. Basic and acidic residues predominate over residues 136–160; that stretch reads EEGHEELLPIKLKDGTLIRPTREKE. Acidic residues predominate over residues 161 to 178; sequence VEEQEEEEKSDIDEGEED. Positions 434 to 474 form a coiled coil; that stretch reads AKKYQIKKERASKTAKKYKKQLARLEADLLEVEAEESLTKK.

The protein belongs to the CBF/MAK21 family.

It localises to the nucleus. The protein resides in the nucleolus. The chain is Nucleolar complex protein 3 homolog from Caenorhabditis briggsae.